The chain runs to 374 residues: Chaperone protein DnaJ (374 aa).

A J domain is found at 4–68; it reads DYYDILGVSR…ETRARYDRFG (65 aa). The segment at 133–215 adopts a CR-type zinc-finger fold; the sequence is GGEKQIRITH…CGGNGQAQVT (83 aa). Cysteine 146, cysteine 149, cysteine 163, cysteine 166, cysteine 189, cysteine 192, cysteine 203, and cysteine 206 together coordinate Zn(2+). 4 CXXCXGXG motif repeats span residues 146-153, 163-170, 189-196, and 203-210; these read CTTCNGSG, CGTCGGAG, CPTCNGKG, and CETCGGNG.

Belongs to the DnaJ family. As to quaternary structure, homodimer. The cofactor is Zn(2+).

The protein resides in the cytoplasm. In terms of biological role, participates actively in the response to hyperosmotic and heat shock by preventing the aggregation of stress-denatured proteins and by disaggregating proteins, also in an autonomous, DnaK-independent fashion. Unfolded proteins bind initially to DnaJ; upon interaction with the DnaJ-bound protein, DnaK hydrolyzes its bound ATP, resulting in the formation of a stable complex. GrpE releases ADP from DnaK; ATP binding to DnaK triggers the release of the substrate protein, thus completing the reaction cycle. Several rounds of ATP-dependent interactions between DnaJ, DnaK and GrpE are required for fully efficient folding. Also involved, together with DnaK and GrpE, in the DNA replication of plasmids through activation of initiation proteins. This is Chaperone protein DnaJ from Cyanothece sp. (strain PCC 7425 / ATCC 29141).